A 255-amino-acid polypeptide reads, in one-letter code: Ribonuclease HII (255 aa).

The 184-residue stretch at Ala72–Leu255 folds into the RNase H type-2 domain. 3 residues coordinate a divalent metal cation: Asp78, Glu79, and Asp170.

The protein belongs to the RNase HII family. Mn(2+) is required as a cofactor. It depends on Mg(2+) as a cofactor.

It localises to the cytoplasm. It catalyses the reaction Endonucleolytic cleavage to 5'-phosphomonoester.. Endonuclease that specifically degrades the RNA of RNA-DNA hybrids. The protein is Ribonuclease HII of Staphylococcus aureus (strain USA300).